A 496-amino-acid chain; its full sequence is Glycylpeptide N-tetradecanoyltransferase 1 (496 aa).

Residues 1 to 82 form a disordered region; the sequence is MADESETAVK…STQDQPVKMT (82 aa). Phosphoserine is present on residues Ser31 and Ser47. Over residues 55-66 the composition is skewed to basic residues; that stretch reads KKKKKKQKKKKE. A Phosphoserine modification is found at Ser83. Tetradecanoyl-CoA contacts are provided by Gln118, Phe119, Trp120, Phe247, Leu248, Cys249, Val250, Ser256, Arg258, Val259, and Ala260.

It belongs to the NMT family. As to expression, ubiquitous.

The protein localises to the cytoplasm. The protein resides in the cytosol. It is found in the membrane. It carries out the reaction N-terminal glycyl-[protein] + tetradecanoyl-CoA = N-tetradecanoylglycyl-[protein] + CoA + H(+). It catalyses the reaction N-terminal glycyl-L-lysyl-[protein] + tetradecanoyl-CoA = N-terminal glycyl-(N(6)-tetradecanoyl)-L-lysyl-[protein] + CoA + H(+). Its function is as follows. Adds a myristoyl group to the N-terminal glycine residue of certain cellular and viral proteins. Also able to mediate N-terminal lysine myristoylation of proteins: catalyzes myristoylation of ARF6 on both 'Gly-2' and 'Lys-3'. Lysine myristoylation is required to maintain ARF6 on membranes during the GTPase cycle. Required for normal embryogenesis. In Mus musculus (Mouse), this protein is Glycylpeptide N-tetradecanoyltransferase 1.